The primary structure comprises 457 residues: Adenylosuccinate synthetase isozyme 2 (457 aa).

Residues 40-46 (GDEGKGK) and 68-70 (GHT) contribute to the GTP site. Catalysis depends on D41, which acts as the Proton acceptor. D41 and G68 together coordinate Mg(2+). D41 provides a ligand contact to substrate. IMP contacts are provided by residues 41–44 (DEGK), 66–69 (NAGH), T163, R177, N256, T271, and R335. The active-site Proton donor is the H69. 331-337 (VTTGRKR) lines the substrate pocket. Residues R337, 363–365 (KLD), and 445–448 (GVGK) contribute to the GTP site.

The protein belongs to the adenylosuccinate synthetase family. In terms of assembly, homodimer. It depends on Mg(2+) as a cofactor.

It is found in the cytoplasm. The protein resides in the mitochondrion. It catalyses the reaction IMP + L-aspartate + GTP = N(6)-(1,2-dicarboxyethyl)-AMP + GDP + phosphate + 2 H(+). Its pathway is purine metabolism; AMP biosynthesis via de novo pathway; AMP from IMP: step 1/2. Its activity is regulated as follows. Inhibited competitively by AMP and IMP and non-competitively by fructose 1,6-bisphosphate. Plays an important role in the de novo pathway and in the salvage pathway of purine nucleotide biosynthesis. Catalyzes the first committed step in the biosynthesis of AMP from IMP. The protein is Adenylosuccinate synthetase isozyme 2 (adss2) of Xenopus laevis (African clawed frog).